Consider the following 122-residue polypeptide: Ribosome-binding factor A (122 aa).

This sequence belongs to the RbfA family. In terms of assembly, monomer. Binds 30S ribosomal subunits, but not 50S ribosomal subunits or 70S ribosomes.

The protein resides in the cytoplasm. Its function is as follows. One of several proteins that assist in the late maturation steps of the functional core of the 30S ribosomal subunit. Associates with free 30S ribosomal subunits (but not with 30S subunits that are part of 70S ribosomes or polysomes). Required for efficient processing of 16S rRNA. May interact with the 5'-terminal helix region of 16S rRNA. The chain is Ribosome-binding factor A from Burkholderia thailandensis (strain ATCC 700388 / DSM 13276 / CCUG 48851 / CIP 106301 / E264).